A 204-amino-acid chain; its full sequence is Urease accessory protein UreG (204 aa).

12–19 (GPVGSGKT) is a GTP binding site.

This sequence belongs to the SIMIBI class G3E GTPase family. UreG subfamily. As to quaternary structure, homodimer. UreD, UreF and UreG form a complex that acts as a GTP-hydrolysis-dependent molecular chaperone, activating the urease apoprotein by helping to assemble the nickel containing metallocenter of UreC. The UreE protein probably delivers the nickel.

It is found in the cytoplasm. Facilitates the functional incorporation of the urease nickel metallocenter. This process requires GTP hydrolysis, probably effectuated by UreG. The chain is Urease accessory protein UreG from Streptococcus salivarius (strain 57.I).